The chain runs to 309 residues: Transcription initiation factor IIB 1 (309 aa).

Repeat copies occupy residues 125–208 and 219–300.

Belongs to the TFIIB family.

Its function is as follows. Stabilizes TBP binding to an archaeal box-A promoter. Also responsible for recruiting RNA polymerase II to the pre-initiation complex (DNA-TBP-TFIIB). In Saccharolobus solfataricus (strain ATCC 35092 / DSM 1617 / JCM 11322 / P2) (Sulfolobus solfataricus), this protein is Transcription initiation factor IIB 1.